The chain runs to 24 residues: Brevinin-1Bc (24 aa).

The cysteines at positions 18 and 24 are disulfide-linked.

As to expression, expressed by the skin glands.

Its subcellular location is the secreted. Antibacterial activity against Gram-positive bacterium S.aureus. In Lithobates berlandieri (Rio Grande leopard frog), this protein is Brevinin-1Bc.